Reading from the N-terminus, the 385-residue chain is MKKISILGVTGSIGTQALDILRKDEENFKLVAVSSHSSVNKLLDIVDEFNPSYAVLTERNAYLKFKDHCSNKNLDTKILFGIDGLNTIVALPDIDMVLTSVVGMVGLVPTIKAIESGKDIALANKETLVVGGELVTKLAKKNKVKIFPVDSEHSAIFQCIKGNNFQDIEKLYLTASGGPFRGRTREQLFNVTVKEALNHPSWRMGKKLTIDSATLMNKGLEVIEAHFLFDMPYEKIKVVIHPESIVHSMVEYNDGSIMAQLSSTDMRLPIQYALNYAKRREALVNRLDFYNMKNLSFEKPDIDTFKPLKLAYDAGKIGGTMPAILNCANEAAVELFLFNKIKFLDISYILEECMNKFTCSNTYTIEDLLHIEIKVKKYVKDKFSK.

5 residues coordinate NADPH: threonine 10, glycine 11, serine 12, isoleucine 13, and asparagine 124. Lysine 125 provides a ligand contact to 1-deoxy-D-xylulose 5-phosphate. Glutamate 126 is a binding site for NADPH. Mn(2+) is bound at residue aspartate 150. Residues serine 151, glutamate 152, serine 176, and histidine 199 each contribute to the 1-deoxy-D-xylulose 5-phosphate site. Glutamate 152 contributes to the Mn(2+) binding site. NADPH is bound at residue glycine 205. 1-deoxy-D-xylulose 5-phosphate contacts are provided by serine 212, asparagine 217, lysine 218, and glutamate 221. Glutamate 221 lines the Mn(2+) pocket.

Belongs to the DXR family. The cofactor is Mg(2+). Mn(2+) is required as a cofactor.

The catalysed reaction is 2-C-methyl-D-erythritol 4-phosphate + NADP(+) = 1-deoxy-D-xylulose 5-phosphate + NADPH + H(+). Its pathway is isoprenoid biosynthesis; isopentenyl diphosphate biosynthesis via DXP pathway; isopentenyl diphosphate from 1-deoxy-D-xylulose 5-phosphate: step 1/6. In terms of biological role, catalyzes the NADPH-dependent rearrangement and reduction of 1-deoxy-D-xylulose-5-phosphate (DXP) to 2-C-methyl-D-erythritol 4-phosphate (MEP). This chain is 1-deoxy-D-xylulose 5-phosphate reductoisomerase, found in Clostridium kluyveri (strain NBRC 12016).